We begin with the raw amino-acid sequence, 314 residues long: MPIKIPDRLPATDILRSENIFVMSEARAATQGIRPLKVLLLNLMPKKIETETQFLRLLSNSPLQVDVELLRIDNRPTKNTPTEHLDTFYRQFEMVKDRNFDGLIVTGAPLGLVQFEDVLYWEEIQVIMNWAKEHVTSTMFVCWAAQAGLKLLYDLPKRTRKEKISGVYEHKIHDRHHPLLRGFDDLFKAPHSRYADFSPSYLAEHTDLDILATSEVAGVYLASTKDKRNVFVTGHPEYEVDTLHHEYIRDCEQGIEPNMPVNYYPDNNASNTPVASWRSHGHLLFSNWLNYCVYQQTPYDLDDFSEANFTKNDE.

The active-site Acyl-thioester intermediate is the Cys142. Substrate is bound by residues Lys163 and Ser192. The active-site Proton acceptor is the His235. The active site involves Glu237. Arg249 contributes to the substrate binding site.

This sequence belongs to the MetA family.

It localises to the cytoplasm. The enzyme catalyses L-homoserine + succinyl-CoA = O-succinyl-L-homoserine + CoA. The protein operates within amino-acid biosynthesis; L-methionine biosynthesis via de novo pathway; O-succinyl-L-homoserine from L-homoserine: step 1/1. Its function is as follows. Transfers a succinyl group from succinyl-CoA to L-homoserine, forming succinyl-L-homoserine. The sequence is that of Homoserine O-succinyltransferase from Photobacterium profundum (strain SS9).